Consider the following 703-residue polypeptide: Polyribonucleotide nucleotidyltransferase (703 aa).

The Mg(2+) site is built by Asp484 and Asp490. In terms of domain architecture, KH spans 551-610; sequence PQMIRMQIDPDKIREVIGPGGKTIHKIVDETGCKIDIEDDGSLFIMATDEEAAKKARFFV. Residues 620 to 694 enclose the S1 motif domain; it reads GKTYMGTVKR…RQGRVNLSRK (75 aa).

This sequence belongs to the polyribonucleotide nucleotidyltransferase family. Mg(2+) serves as cofactor.

It localises to the cytoplasm. It catalyses the reaction RNA(n+1) + phosphate = RNA(n) + a ribonucleoside 5'-diphosphate. Its function is as follows. Involved in mRNA degradation. Catalyzes the phosphorolysis of single-stranded polyribonucleotides processively in the 3'- to 5'-direction. The chain is Polyribonucleotide nucleotidyltransferase from Syntrophomonas wolfei subsp. wolfei (strain DSM 2245B / Goettingen).